The primary structure comprises 252 residues: Body wall muscle protein HR-29 (252 aa).

N-acetylserine is present on S2. 3 repeat units span residues 37 to 55, 56 to 74, and 75 to 93. The 3 X 19 AA approximate tandem repeats stretch occupies residues 37 to 93; it reads RDWMTTPYSSTGIGRRDLSQDWMTTPYTPAGVGRRDLSQDWMTTPYTSKGIGSRNLS. Positions 138-249 constitute a sHSP domain; the sequence is ISVEHEGKTT…KKTAVPVTVE (112 aa).

Belongs to the small heat shock protein (HSP20) family. Exists as an oligomer.

The protein localises to the membrane. In terms of biological role, may be a component of myofibrils where it acts as a stabilizer. This is Body wall muscle protein HR-29 from Halocynthia roretzi (Sea squirt).